The sequence spans 395 residues: Neuromedin-U receptor 2 (395 aa).

Topologically, residues 1–41 are extracellular; sequence MGKLENASWIHDSLMKYLNSTEEYLAYLCGPKRSDLSLPVS. N-linked (GlcNAc...) asparagine glycosylation is found at N6 and N19. Residues 42 to 62 form a helical membrane-spanning segment; that stretch reads VVYALIFVVGVIGNLLVCLVI. At 63 to 74 the chain is on the cytoplasmic side; that stretch reads ARHQTLKTPTNY. The helical transmembrane segment at 75-95 threads the bilayer; the sequence is YLFSLAVSDLLVLLLGMPLEV. The Extracellular segment spans residues 96-115; that stretch reads YELWHNYPFLFGPVGCYFKT. C111 and C196 are oxidised to a cystine. A helical membrane pass occupies residues 116–138; it reads ALFETVCFASILSVTTVSIERYV. Residues 139 to 157 are Cytoplasmic-facing; that stretch reads AIVHPFRAKLESTRRRALR. A helical membrane pass occupies residues 158 to 178; sequence ILSLVWSFSVVFSLPNTSIHG. The Extracellular portion of the chain corresponds to 179–212; that stretch reads IKFQQFPNGSSVPGSATCTVTKPIWVYNFIIQAT. An N-linked (GlcNAc...) asparagine glycan is attached at N186. Residues 213 to 233 traverse the membrane as a helical segment; it reads SFLFYILPMTLISVLYYLMGL. The Cytoplasmic portion of the chain corresponds to 234-257; that stretch reads RLKRDESLEADKVTVNIHRPSRKS. The helical transmembrane segment at 258-278 threads the bilayer; sequence VTKMLFVLVLVFAICWTPFHV. Topologically, residues 279-293 are extracellular; that stretch reads DRLFFSFVDEWTESL. The chain crosses the membrane as a helical span at residues 294-314; sequence AAVFNLIHVVSGVFFYLSSAV. At 315-395 the chain is on the cytoplasmic side; it reads NPIIYNLLSR…TTVPCVEEVP (81 aa).

It belongs to the G-protein coupled receptor 1 family. As to expression, expressed primarily in brain tissues, more specifically in medulla and spinal cord. Widespread distribution in peripheral tissues.

Its subcellular location is the cell membrane. In terms of biological role, receptor for the neuromedin-U and neuromedin-S neuropeptides. This is Neuromedin-U receptor 2 (Nmur2) from Mus musculus (Mouse).